The primary structure comprises 190 residues: ATP-dependent Clp protease proteolytic subunit 2 (190 aa).

Serine 98 acts as the Nucleophile in catalysis. Histidine 123 is an active-site residue.

The protein belongs to the peptidase S14 family. As to quaternary structure, fourteen ClpP subunits assemble into 2 heptameric rings which stack back to back to give a disk-like structure with a central cavity, resembling the structure of eukaryotic proteasomes.

The protein localises to the cytoplasm. It catalyses the reaction Hydrolysis of proteins to small peptides in the presence of ATP and magnesium. alpha-casein is the usual test substrate. In the absence of ATP, only oligopeptides shorter than five residues are hydrolyzed (such as succinyl-Leu-Tyr-|-NHMec, and Leu-Tyr-Leu-|-Tyr-Trp, in which cleavage of the -Tyr-|-Leu- and -Tyr-|-Trp bonds also occurs).. In terms of biological role, cleaves peptides in various proteins in a process that requires ATP hydrolysis. Has a chymotrypsin-like activity. Plays a major role in the degradation of misfolded proteins. This Bacillus licheniformis (strain ATCC 14580 / DSM 13 / JCM 2505 / CCUG 7422 / NBRC 12200 / NCIMB 9375 / NCTC 10341 / NRRL NRS-1264 / Gibson 46) protein is ATP-dependent Clp protease proteolytic subunit 2.